The sequence spans 375 residues: Aminomethyltransferase (375 aa).

It belongs to the GcvT family. In terms of assembly, the glycine cleavage system is composed of four proteins: P, T, L and H.

It catalyses the reaction N(6)-[(R)-S(8)-aminomethyldihydrolipoyl]-L-lysyl-[protein] + (6S)-5,6,7,8-tetrahydrofolate = N(6)-[(R)-dihydrolipoyl]-L-lysyl-[protein] + (6R)-5,10-methylene-5,6,7,8-tetrahydrofolate + NH4(+). The glycine cleavage system catalyzes the degradation of glycine. The chain is Aminomethyltransferase from Cupriavidus pinatubonensis (strain JMP 134 / LMG 1197) (Cupriavidus necator (strain JMP 134)).